Here is a 132-residue protein sequence, read N- to C-terminus: Myelin P2 protein (132 aa).

S2 bears the N-acetylserine mark. (9Z)-octadecenoate contacts are provided by residues R107 and 127-129; that span reads RIY. Hexadecanoate is bound by residues R107 and 127-129; that span reads RIY.

Belongs to the calycin superfamily. Fatty-acid binding protein (FABP) family. In terms of assembly, monomer.

The protein resides in the cytoplasm. In terms of biological role, may play a role in lipid transport protein in Schwann cells. May bind cholesterol. The sequence is that of Myelin P2 protein (PMP2) from Oryctolagus cuniculus (Rabbit).